The primary structure comprises 151 residues: ATP synthase subunit b' (151 aa).

Residues Thr-18–Phe-38 form a helical membrane-spanning segment.

Belongs to the ATPase B chain family. F-type ATPases have 2 components, F(1) - the catalytic core - and F(0) - the membrane proton channel. F(1) has five subunits: alpha(3), beta(3), gamma(1), delta(1), epsilon(1). F(0) has four main subunits: a(1), b(1), b'(1) and c(10-14). The alpha and beta chains form an alternating ring which encloses part of the gamma chain. F(1) is attached to F(0) by a central stalk formed by the gamma and epsilon chains, while a peripheral stalk is formed by the delta, b and b' chains.

It localises to the cellular thylakoid membrane. F(1)F(0) ATP synthase produces ATP from ADP in the presence of a proton or sodium gradient. F-type ATPases consist of two structural domains, F(1) containing the extramembraneous catalytic core and F(0) containing the membrane proton channel, linked together by a central stalk and a peripheral stalk. During catalysis, ATP synthesis in the catalytic domain of F(1) is coupled via a rotary mechanism of the central stalk subunits to proton translocation. Functionally, component of the F(0) channel, it forms part of the peripheral stalk, linking F(1) to F(0). The b'-subunit is a diverged and duplicated form of b found in plants and photosynthetic bacteria. This chain is ATP synthase subunit b', found in Prochlorococcus marinus (strain MIT 9313).